Reading from the N-terminus, the 445-residue chain is Phosphoglucosamine mutase (445 aa).

Ser-99 (phosphoserine intermediate) is an active-site residue. Mg(2+)-binding residues include Ser-99, Asp-242, Asp-244, and Asp-246. Residue Ser-99 is modified to Phosphoserine.

Belongs to the phosphohexose mutase family. Mg(2+) serves as cofactor. In terms of processing, activated by phosphorylation.

The enzyme catalyses alpha-D-glucosamine 1-phosphate = D-glucosamine 6-phosphate. Functionally, catalyzes the conversion of glucosamine-6-phosphate to glucosamine-1-phosphate. This Sulfurovum sp. (strain NBC37-1) protein is Phosphoglucosamine mutase.